The following is a 205-amino-acid chain: Thymidylate kinase (205 aa).

11 to 18 (GPEGSGKT) serves as a coordination point for ATP.

The protein belongs to the thymidylate kinase family.

The enzyme catalyses dTMP + ATP = dTDP + ADP. In terms of biological role, phosphorylation of dTMP to form dTDP in both de novo and salvage pathways of dTTP synthesis. In Clostridium novyi (strain NT), this protein is Thymidylate kinase.